A 160-amino-acid polypeptide reads, in one-letter code: 3-hydroxyacyl-[acyl-carrier-protein] dehydratase FabZ (160 aa).

The active site involves His-58.

It belongs to the thioester dehydratase family. FabZ subfamily.

It localises to the cytoplasm. The enzyme catalyses a (3R)-hydroxyacyl-[ACP] = a (2E)-enoyl-[ACP] + H2O. Involved in unsaturated fatty acids biosynthesis. Catalyzes the dehydration of short chain beta-hydroxyacyl-ACPs and long chain saturated and unsaturated beta-hydroxyacyl-ACPs. In Ruegeria sp. (strain TM1040) (Silicibacter sp.), this protein is 3-hydroxyacyl-[acyl-carrier-protein] dehydratase FabZ.